The chain runs to 247 residues: Cyclin-Q (247 aa).

Belongs to the cyclin family. Cyclin-like FAM58 subfamily.

Its function is as follows. May be an activating cyclin for the cyclin-associated kinase CDK10. The protein is Cyclin-Q (ccnq) of Danio rerio (Zebrafish).